A 135-amino-acid chain; its full sequence is Alpha-ketoglutarate dehydrogenase subunit 4, mitochondrial (135 aa).

It belongs to the alpha-ketoglutarate dehydrogenase component 4 family. Component of the 2-oxoglutarate dehydrogenase complex (OGDC), also called alpha-ketoglutarate dehydrogenase (KGDH) complex. The copmplex is composed of the catalytic subunits OGDH (2-oxoglutarate dehydrogenase; also called E1 subunit), DLST (dihydrolipoamide succinyltransferase; also called E2 subunit) and DLD (dihydrolipoamide dehydrogenase; also called E3 subunit), and the assembly factor KGD4. Within OGDC, interacts (via N-terminus) with E3 subunit and (via C-terminus) with the complex core formed by E1 and E2 subunits.

Its subcellular location is the mitochondrion. Molecular adapter that is necessary to a form a stable 2-oxoglutarate dehydrogenase enzyme complex (OGDC). Required for incorporation of the E3 subunit into the E1-E2 core of mitochondrial OGDC, and acting as a stability factor for the fully assembled complex. In Chaetomium thermophilum (strain DSM 1495 / CBS 144.50 / IMI 039719) (Thermochaetoides thermophila), this protein is Alpha-ketoglutarate dehydrogenase subunit 4, mitochondrial (KGD4).